We begin with the raw amino-acid sequence, 288 residues long: Probable endonuclease 4 (288 aa).

Zn(2+) contacts are provided by His-75, His-115, Glu-153, Asp-187, His-190, His-224, Asp-237, His-239, and Glu-269.

This sequence belongs to the AP endonuclease 2 family. It depends on Zn(2+) as a cofactor.

The catalysed reaction is Endonucleolytic cleavage to 5'-phosphooligonucleotide end-products.. Endonuclease IV plays a role in DNA repair. It cleaves phosphodiester bonds at apurinic or apyrimidinic (AP) sites, generating a 3'-hydroxyl group and a 5'-terminal sugar phosphate. This is Probable endonuclease 4 from Chlamydia trachomatis serovar L2 (strain ATCC VR-902B / DSM 19102 / 434/Bu).